Reading from the N-terminus, the 309-residue chain is Calcium homeostasis modulator protein 5 (309 aa).

The Cytoplasmic segment spans residues 1–15 (MDAFQSILKFFLNQK). Residues 16 to 37 (TAIGYSFMALLTVGSERLFSLV) form a helical membrane-spanning segment. Arginine 32 and valine 37 together coordinate a 1,2-diacyl-sn-glycero-3-phosphate. The Extracellular portion of the chain corresponds to 38–45 (AFKCPCSV). Intrachain disulfides connect cysteine 41/cysteine 127, cysteine 43/cysteine 158, and cysteine 142/cysteine 149. Residues 46-70 (ENTAYGLVFLFAPAWVLLILGFFLN) traverse the membrane as a helical segment. The Cytoplasmic portion of the chain corresponds to 71-99 (NKAWRLFTGCCMNPKKIFPRRRCCRFFYV). Residues 100–129 (LGHIILSSLVAPVMWLSVALLNGTFYECAM) form a helical membrane-spanning segment. Asparagine 121 contributes to the a 1,2-diacyl-sn-glycero-3-phosphate binding site. Residues 130–174 (SGTRSTRLLEMICKGKPKECWEELHKVSCGKSSMAAMESEEVRLS) are Extracellular-facing. The helical transmembrane segment at 175–200 (LQAQSQILGWCLICSASFLSLLTTCY) threads the bilayer. The Cytoplasmic portion of the chain corresponds to 201-309 (ARCRSKVSYL…MILVGTAQSL (109 aa)). An a 1,2-diacyl-sn-glycero-3-phosphate-binding site is contributed by arginine 202.

This sequence belongs to the CALHM family. As to quaternary structure, oligomerizes to form undecameric cone-shaped channels.

It is found in the membrane. May assemble to form large pore channels with gating and ion conductance likely regulated by membrane lipids. This is Calcium homeostasis modulator protein 5 from Mus musculus (Mouse).